Consider the following 379-residue polypeptide: Glutamate 5-kinase (379 aa).

ATP is bound at residue Lys-19. Substrate-binding residues include Ser-59, Asp-146, and Asn-158. Residues 178–179 and 220–226 each bind ATP; these read TD and TGGMATK. The 79-residue stretch at 285-363 folds into the PUA domain; it reads SGDIVIDQGA…KDIISILGYD (79 aa).

It belongs to the glutamate 5-kinase family.

Its subcellular location is the cytoplasm. The catalysed reaction is L-glutamate + ATP = L-glutamyl 5-phosphate + ADP. The protein operates within amino-acid biosynthesis; L-proline biosynthesis; L-glutamate 5-semialdehyde from L-glutamate: step 1/2. In terms of biological role, catalyzes the transfer of a phosphate group to glutamate to form L-glutamate 5-phosphate. The polypeptide is Glutamate 5-kinase (Vibrio vulnificus (strain YJ016)).